The sequence spans 283 residues: Pyridoxal kinase PdxY (283 aa).

A substrate-binding site is contributed by Ser8. ATP-binding residues include Asp110 and Glu147. A substrate-binding site is contributed by Asp219.

Belongs to the pyridoxine kinase family. PdxY subfamily. Homodimer. Mg(2+) serves as cofactor.

The enzyme catalyses pyridoxal + ATP = pyridoxal 5'-phosphate + ADP + H(+). It functions in the pathway cofactor metabolism; pyridoxal 5'-phosphate salvage; pyridoxal 5'-phosphate from pyridoxal: step 1/1. Pyridoxal kinase involved in the salvage pathway of pyridoxal 5'-phosphate (PLP). Catalyzes the phosphorylation of pyridoxal to PLP. In Corynebacterium diphtheriae (strain ATCC 700971 / NCTC 13129 / Biotype gravis), this protein is Pyridoxal kinase PdxY.